Here is an 83-residue protein sequence, read N- to C-terminus: Exodeoxyribonuclease 7 small subunit (83 aa).

This sequence belongs to the XseB family. In terms of assembly, heterooligomer composed of large and small subunits.

The protein localises to the cytoplasm. The enzyme catalyses Exonucleolytic cleavage in either 5'- to 3'- or 3'- to 5'-direction to yield nucleoside 5'-phosphates.. Functionally, bidirectionally degrades single-stranded DNA into large acid-insoluble oligonucleotides, which are then degraded further into small acid-soluble oligonucleotides. This Rhizobium leguminosarum bv. trifolii (strain WSM2304) protein is Exodeoxyribonuclease 7 small subunit.